The chain runs to 330 residues: Putative heme-binding peroxidase (330 aa).

His-38 (proton acceptor) is an active-site residue. A heme b-binding site is contributed by His-162. Catalysis depends on Trp-178, which acts as the Tryptophan radical intermediate. Residues 286 to 330 (GEYKSAPQKSPVPGAPGAGKDGEANPLARQNERAHGQAQHALAKL) form a disordered region.

It belongs to the peroxidase family. Cytochrome c peroxidase subfamily. It depends on heme b as a cofactor.

Destroys radicals which are normally produced within the cells and which are toxic to biological systems. The sequence is that of Putative heme-binding peroxidase (CCP2) from Mycosarcoma maydis (Corn smut fungus).